We begin with the raw amino-acid sequence, 187 residues long: Ribulose bisphosphate carboxylase small subunit, chloroplastic (187 aa).

A chloroplast-targeting transit peptide spans 1 to 56 (MASSVMSTATVATGANAAQASMIASFNGLKSAASFPVTRKQDLDITSIASNGGRVE).

This sequence belongs to the RuBisCO small chain family. In terms of assembly, heterohexadecamer of 8 large and 8 small subunits.

It is found in the plastid. The protein localises to the chloroplast. RuBisCO catalyzes two reactions: the carboxylation of D-ribulose 1,5-bisphosphate, the primary event in carbon dioxide fixation, as well as the oxidative fragmentation of the pentose substrate. Both reactions occur simultaneously and in competition at the same active site. Although the small subunit is not catalytic it is essential for maximal activity. The sequence is that of Ribulose bisphosphate carboxylase small subunit, chloroplastic from Capsicum annuum (Capsicum pepper).